The following is a 336-amino-acid chain: MCGRTACTLAPDDVSKACSYQDKQGRQKCPKWRDGDTDKYQPSYNKSPQSNNPVLLSLKHFQKDADSSERVLAAMRWGLIPSWFNELDPSKMQYKTNNCRSDTITEKALYKAPLFKGRRCVVLADGFYEWKRQDGEKQPYYIYFPQIKSEKFPEEQDMMDWNGQRLLTMAGLFDCWEPPSGGEPLYSYTVITVDSSKTMNCIHDRMPAILDGDEAIRKWLDFGEVSTQDALKLIHPIENITYHPVSTVVNNSRNNSTECIAAVILTQKKGPALSASSKKMLEWLQNKSPKKEESRSIIQSPKLSQFGAPPKKTSAGLMQQWLKKEDGEPSPKRAKK.

Cys-2 (nucleophile) is an active-site residue. Cys-2 is modified (thiazolidine linkage to a ring-opened DNA abasic site). The interval Arg-26–Asn-51 is disordered. A compositionally biased stretch (polar residues) spans Tyr-40–Asn-51. Glu-129 is an active-site residue. Residues Gln-285 to Lys-336 form a disordered region. The span at Leu-322 to Lys-336 shows a compositional bias: basic and acidic residues.

The protein belongs to the SOS response-associated peptidase family. Ubiquitination of the hmces DNA-protein cross-link by rfwd3 may promotes its degradation.

It localises to the chromosome. Formation and reversal of DNA-protein cross-link depends on DNA context. Catalyzes formation of the thiazolidine linkage in presence of abasic sites in single-stranded DNA. Mediates the reversal of the thiazolidine cross-link in presence of double stranded DNA. Its function is as follows. Sensor of abasic sites in single-stranded DNA (ssDNA) required to preserve genome integrity by promoting error-free repair of abasic sites. Acts as an enzyme that recognizes and binds abasic sites in ssDNA at replication forks and chemically modifies the lesion by forming a covalent cross-link with DNA: forms a stable thiazolidine linkage between a ring-opened abasic site and the alpha-amino and sulfhydryl substituents of its N-terminal catalytic cysteine residue. The hmces DNA-protein cross-link is then either reversed or degraded. Hmces is able to catalyze the reversal of its thiazolidine cross-link and cycle between a cross-link and a non-cross-linked state depending on DNA context: mediates self-reversal of the thiazolidine cross-link in double stranded DNA, allowing apex1 to initiate downstream repair of abasic sites. The hmces DNA-protein cross-link can also be degraded by the sprtn metalloprotease following unfolding by the brip1/fancj helicase. Promotes error-free repair of abasic sites by protecting abasic sites from translesion synthesis (TLS) polymerases and endonucleases that are error-prone and would generate mutations and double-strand breaks. Acts as a protease: mediates autocatalytic processing of its N-terminal methionine in order to expose the catalytic cysteine. The HMCES DNA-protein cross-link is then either reversed or degraded. According to a model, the HMCES DNA-protein cross-link. The polypeptide is Abasic site processing protein HMCES (Xenopus laevis (African clawed frog)).